Consider the following 261-residue polypeptide: Cobalt transport protein CbiM (261 aa).

Residues Met1–Ala33 form the signal peptide. Helical transmembrane passes span Leu41–Val61, Leu76–Val96, Leu108–Phe128, Thr140–Tyr160, Ile172–Gln192, Phe197–Ile217, and Ile220–Tyr240.

It belongs to the CbiM family. In terms of assembly, forms an energy-coupling factor (ECF) transporter complex composed of an ATP-binding protein (A component, CbiO), a transmembrane protein (T component, CbiQ) and 2 possible substrate-capture proteins (S components, CbiM and CbiN) of unknown stoichimetry.

It localises to the cell inner membrane. The protein operates within cofactor biosynthesis; adenosylcobalamin biosynthesis. In terms of biological role, part of the energy-coupling factor (ECF) transporter complex CbiMNOQ involved in cobalt import. The sequence is that of Cobalt transport protein CbiM from Nostoc sp. (strain PCC 7120 / SAG 25.82 / UTEX 2576).